The primary structure comprises 347 residues: Melanoma-associated antigen B1 (347 aa).

Positions 1 to 17 (MPRGQKSKLRAREKRRK) are enriched in basic residues. The tract at residues 1-104 (MPRGQKSKLR…QATTSTESSV (104 aa)) is disordered. Polar residues-rich tracts occupy residues 39–53 (PSSS…TSSP) and 89–102 (ENAS…STES). One can recognise an MAGE domain in the interval 108–307 (VAWEAGMLMH…RDFPSHYEEA (200 aa)). The disordered stretch occupies residues 315-347 (AQVRSSVRARRRTTATTFRARSRAPFSRSSHPM). Positions 328-347 (TATTFRARSRAPFSRSSHPM) are enriched in low complexity.

As to expression, expressed only in testis.

This Homo sapiens (Human) protein is Melanoma-associated antigen B1 (MAGEB1).